The following is a 122-amino-acid chain: Small ribosomal subunit protein uS13 (122 aa).

A disordered region spans residues 93 to 122 (RRGLPVRGQRTKTNARTRKGPKKTIAGKKK).

It belongs to the universal ribosomal protein uS13 family. As to quaternary structure, part of the 30S ribosomal subunit. Forms a loose heterodimer with protein S19. Forms two bridges to the 50S subunit in the 70S ribosome.

Located at the top of the head of the 30S subunit, it contacts several helices of the 16S rRNA. In the 70S ribosome it contacts the 23S rRNA (bridge B1a) and protein L5 of the 50S subunit (bridge B1b), connecting the 2 subunits; these bridges are implicated in subunit movement. Contacts the tRNAs in the A and P-sites. This Corynebacterium efficiens (strain DSM 44549 / YS-314 / AJ 12310 / JCM 11189 / NBRC 100395) protein is Small ribosomal subunit protein uS13.